Here is a 345-residue protein sequence, read N- to C-terminus: L-threonine 3-dehydrogenase (345 aa).

Cys39 is a Zn(2+) binding site. Active-site charge relay system residues include Thr41 and His44. The Zn(2+) site is built by His64, Glu65, Cys94, Cys97, Cys100, and Cys108. Residues Ile176, Asp196, Arg201, 263-265 (LGI), and 287-288 (VY) each bind NAD(+).

The protein belongs to the zinc-containing alcohol dehydrogenase family. In terms of assembly, homotetramer. It depends on Zn(2+) as a cofactor.

The protein localises to the cytoplasm. The enzyme catalyses L-threonine + NAD(+) = (2S)-2-amino-3-oxobutanoate + NADH + H(+). Its pathway is amino-acid degradation; L-threonine degradation via oxydo-reductase pathway; glycine from L-threonine: step 1/2. In terms of biological role, catalyzes the NAD(+)-dependent oxidation of L-threonine to 2-amino-3-ketobutyrate. This chain is L-threonine 3-dehydrogenase, found in Anaeromyxobacter dehalogenans (strain 2CP-C).